The sequence spans 370 residues: GTPase Obg (370 aa).

Residues 1–159 (MKFVDEAYID…KKLKLELRVL (159 aa)) form the Obg domain. Residues 160-333 (ADVGLLGMPN…LVQAIYQHVA (174 aa)) form the OBG-type G domain. Residues 166-173 (GMPNAGKS), 191-195 (FTTLH), 213-216 (DVPG), 283-286 (NKLD), and 314-316 (SAL) each bind GTP. Mg(2+) is bound by residues Ser173 and Thr193. The interval 346–370 (FAEPEADESDDEPRFAPQADDPRFR) is disordered.

This sequence belongs to the TRAFAC class OBG-HflX-like GTPase superfamily. OBG GTPase family. As to quaternary structure, monomer. Mg(2+) serves as cofactor.

It localises to the cytoplasm. Functionally, an essential GTPase which binds GTP, GDP and possibly (p)ppGpp with moderate affinity, with high nucleotide exchange rates and a fairly low GTP hydrolysis rate. Plays a role in control of the cell cycle, stress response, ribosome biogenesis and in those bacteria that undergo differentiation, in morphogenesis control. This Methylibium petroleiphilum (strain ATCC BAA-1232 / LMG 22953 / PM1) protein is GTPase Obg.